Reading from the N-terminus, the 117-residue chain is Mini-circle uncharacterized 12.9 kDa protein (117 aa).

The polypeptide is Mini-circle uncharacterized 12.9 kDa protein (Streptomyces coelicolor (strain ATCC BAA-471 / A3(2) / M145)).